A 395-amino-acid polypeptide reads, in one-letter code: Tryptophan synthase beta chain (395 aa).

Lys89 carries the post-translational modification N6-(pyridoxal phosphate)lysine.

This sequence belongs to the TrpB family. As to quaternary structure, tetramer of two alpha and two beta chains. Requires pyridoxal 5'-phosphate as cofactor.

It carries out the reaction (1S,2R)-1-C-(indol-3-yl)glycerol 3-phosphate + L-serine = D-glyceraldehyde 3-phosphate + L-tryptophan + H2O. The protein operates within amino-acid biosynthesis; L-tryptophan biosynthesis; L-tryptophan from chorismate: step 5/5. Its function is as follows. The beta subunit is responsible for the synthesis of L-tryptophan from indole and L-serine. This Fusobacterium nucleatum subsp. nucleatum (strain ATCC 25586 / DSM 15643 / BCRC 10681 / CIP 101130 / JCM 8532 / KCTC 2640 / LMG 13131 / VPI 4355) protein is Tryptophan synthase beta chain.